Reading from the N-terminus, the 396-residue chain is Phosphoglycerate kinase (396 aa).

Residues 19-21, Arg34, 57-60, Arg116, and Arg153 contribute to the substrate site; these read DFN and HLGK. Residues Lys204, Glu324, and 351 to 354 contribute to the ATP site; that span reads GGDT.

The protein belongs to the phosphoglycerate kinase family. Monomer.

It localises to the cytoplasm. The catalysed reaction is (2R)-3-phosphoglycerate + ATP = (2R)-3-phospho-glyceroyl phosphate + ADP. The protein operates within carbohydrate degradation; glycolysis; pyruvate from D-glyceraldehyde 3-phosphate: step 2/5. This Maridesulfovibrio salexigens (strain ATCC 14822 / DSM 2638 / NCIMB 8403 / VKM B-1763) (Desulfovibrio salexigens) protein is Phosphoglycerate kinase.